The chain runs to 865 residues: MLSTALSPSSPHADYNSYSSSLSPTSPRFHASSAPHGRRSPSPSRLESLLDAPLPSCRPSRSPRSRKIRDALARHIRPHLTPRTLTMLFLWMLSVWSIHHFFLPISSLSRLSNPRAEEHFLSTAFPPPPQRIGDDHLDSVDPRWRAYHPLPAPDPPFPRLRPTRFLPPQCLEQWFAEGETLCGAKELGEEEKLDATWLWVNGSDHRWRDSMIEWREKENVNSPERHFREQNELVHSMRSVLDALPGHLRTFHLILADYTFNYPEDLELVPFSIIPDLEKVASKSKGRRHPRDLPGTPPSFSNLTERVTPESISASLASHLQSEWRIVQTPTWLDFSRRDPSDPSHPFHPYSVSKAGERGQHYAEASYPTLRYASHWEVFHTPSVDRDGRQELMGEREWRENEWKKKALPTFNSMAIESRIGWLPGLADAIIALNDDFFLLRPHAVSDFHSPLYGSVIRFDHGYNQQVRPEVVKSHINDPGEIGGLYHANAILSQRFPHRLRPYFAHVPKVITRGLHHEASLMFKEALTESSTRRFREMKIGEGDVQMQWLLTSLRVERWREALLWTWVVANMGTISGSQDRWDDATRTAIKDMFGFTENDNDVVKIEVHRGERWTLEPGRMQKAFEQAGWEAPKATEFLFSSMDGTMPPLLKHGEDPAQNDRCMIDLNRCFGVFWTREEDILSTDMMKRLTFQYPECGDCMIMALVTASGTLGLNAFFPPKETTVTAPELAPGDGYPKFLPPPHLPLTPTWHEADFSLANILSTTALPGEQVDIRQYCMRLLSRYLYLDARSVSHFHMLKSAEHAQRVFKMIQDNPRVSILGMNDDIESDYDEVKRLMNEWFEMRWPRKAVWEREWDPVKDRYID.

The segment covering 1 to 10 has biased composition (polar residues); it reads MLSTALSPSS. The segment at 1–66 is disordered; that stretch reads MLSTALSPSS…CRPSRSPRSR (66 aa). Topologically, residues 1 to 84 are cytoplasmic; the sequence is MLSTALSPSS…HIRPHLTPRT (84 aa). Low complexity-rich tracts occupy residues 17–26 and 40–60; these read SYSSSLSPTS and SPSP…CRPS. The chain crosses the membrane as a helical span at residues 85 to 105; the sequence is LTMLFLWMLSVWSIHHFFLPI. Residues 106–865 lie on the Lumenal side of the membrane; that stretch reads SSLSRLSNPR…WDPVKDRYID (760 aa). Asn-201 and Asn-302 each carry an N-linked (GlcNAc...) asparagine glycan. The segment at 283–304 is disordered; sequence KSKGRRHPRDLPGTPPSFSNLT.

Belongs to the XPT1 family. Mn(2+) serves as cofactor.

It is found in the golgi apparatus membrane. The enzyme catalyses 3-alpha-D-mannopyranosyl-alpha-D-mannopyranose + UDP-alpha-D-xylose = 3-O-(6-O-alpha-D-xylosylphospho-alpha-D-mannopyranosyl)-alpha-D-mannopyranose + UMP + H(+). Xylosylphosphotransferase that is specific for UDP-xylose as a donor and mannose as an acceptor to form a xylose-alpha-1-phosphate-6-mannose linkage. Functions in the O-glycosylation of proteins en route through the secretory pathway. The sequence is that of 3-O-alpha-D-mannopyranosyl-alpha-D-mannopyranose xylosylphosphotransferase (XPT1) from Cryptococcus gattii serotype B (strain WM276 / ATCC MYA-4071) (Filobasidiella gattii).